Here is a 321-residue protein sequence, read N- to C-terminus: MYLYTLILLFLASANVNAYANPGACSGNCWTHDPGLYQRKSDGKYFRFATGGGIHIASADSLEGPWTDDGYVLPSGSIIDLDGKTNLWAPDLHYHDGTYYLYYAVSSLGSQNSAIGVATSKTMEAGSWTDHGTTGIESTPSSPYNTIDANWIAVGGNQYVNFGSYWNNLFQVEMENGLKVKSGATPHQIAYNASGIHRQEAAFMFERNNYFYLTFSGGIALGYNDTWPAPGEEYFIAVCRSTSATGGFVDKNGVSCLNSGGSLLLSSHDFVYGPGGQGILQDSSKGFVLYYHYADTRIGKAVEDYQFGWNQLKWENDWPSV.

An N-terminal signal peptide occupies residues 1-18 (MYLYTLILLFLASANVNA). The active-site Proton acceptor is Asp33. Asn192 is a glycosylation site (N-linked (GlcNAc...) asparagine). Catalysis depends on Glu200, which acts as the Proton donor. Asn224 carries an N-linked (GlcNAc...) asparagine glycan.

This sequence belongs to the glycosyl hydrolase 43 family.

Its subcellular location is the secreted. It carries out the reaction Endohydrolysis of (1-&gt;5)-alpha-arabinofuranosidic linkages in (1-&gt;5)-arabinans.. The protein operates within glycan metabolism; L-arabinan degradation. Its function is as follows. Endo-1,5-alpha-L-arabinanase involved in degradation of pectin. Its preferred substrate is linear 1,5-alpha-L-arabinan. The chain is Probable arabinan endo-1,5-alpha-L-arabinosidase C (abnC) from Aspergillus fumigatus (strain CBS 144.89 / FGSC A1163 / CEA10) (Neosartorya fumigata).